A 154-amino-acid chain; its full sequence is Urease accessory protein UreE (154 aa).

The protein belongs to the UreE family.

The protein resides in the cytoplasm. Functionally, involved in urease metallocenter assembly. Binds nickel. Probably functions as a nickel donor during metallocenter assembly. The protein is Urease accessory protein UreE of Prochlorococcus marinus subsp. pastoris (strain CCMP1986 / NIES-2087 / MED4).